The primary structure comprises 233 residues: Rab-like protein 3 (233 aa).

The tract at residues 1 to 233 (MASLDRVKVL…RFNFKSLHSD (233 aa)) is small GTPase-like. GTP is bound by residues 16-21 (GVGKSS), 148-150 (KFD), and 179-180 (DC).

The protein belongs to the small GTPase superfamily. Rab family. As to quaternary structure, homodimer.

Functionally, required for KRAS signaling regulation and modulation of cell proliferation. Regulator of KRAS prenylation, and probably prenylation of other small GTPases. Required for lymphocyte development and function. Not required for myeloid cell development. The polypeptide is Rab-like protein 3 (rabl3) (Danio rerio (Zebrafish)).